The primary structure comprises 377 residues: Succinyl-diaminopimelate desuccinylase (377 aa).

His-68 contacts Zn(2+). Asp-70 is a catalytic residue. Asp-101 lines the Zn(2+) pocket. Glu-135 functions as the Proton acceptor in the catalytic mechanism. Positions 136, 164, and 350 each coordinate Zn(2+).

Belongs to the peptidase M20A family. DapE subfamily. Homodimer. Requires Zn(2+) as cofactor. The cofactor is Co(2+).

The enzyme catalyses N-succinyl-(2S,6S)-2,6-diaminopimelate + H2O = (2S,6S)-2,6-diaminopimelate + succinate. Its pathway is amino-acid biosynthesis; L-lysine biosynthesis via DAP pathway; LL-2,6-diaminopimelate from (S)-tetrahydrodipicolinate (succinylase route): step 3/3. Its function is as follows. Catalyzes the hydrolysis of N-succinyl-L,L-diaminopimelic acid (SDAP), forming succinate and LL-2,6-diaminopimelate (DAP), an intermediate involved in the bacterial biosynthesis of lysine and meso-diaminopimelic acid, an essential component of bacterial cell walls. The polypeptide is Succinyl-diaminopimelate desuccinylase (Vibrio vulnificus (strain CMCP6)).